Here is a 387-residue protein sequence, read N- to C-terminus: Low specificity L-threonine aldolase (387 aa).

N6-(pyridoxal phosphate)lysine is present on Lys-213. Lys-228 is covalently cross-linked (Glycyl lysine isopeptide (Lys-Gly) (interchain with G-Cter in ubiquitin)). Phosphoserine occurs at positions 367 and 369. The residue at position 370 (Thr-370) is a Phosphothreonine.

It belongs to the threonine aldolase family. Homotetramer. Requires pyridoxal 5'-phosphate as cofactor.

The catalysed reaction is L-threonine = acetaldehyde + glycine. The enzyme catalyses L-allo-threonine = acetaldehyde + glycine. It participates in amino-acid biosynthesis; glycine biosynthesis; glycine from L-allo-threonine: step 1/1. Its pathway is amino-acid degradation; L-threonine degradation via aldolase pathway; acetaldehyde and glycine from L-threonine: step 1/1. Catalyzes the cleavage of L-allo-threonine and L-threonine to glycine and acetaldehyde. In Saccharomyces cerevisiae (strain ATCC 204508 / S288c) (Baker's yeast), this protein is Low specificity L-threonine aldolase (GLY1).